The primary structure comprises 212 residues: Prohead core protein protease (212 aa).

His-85 is an active-site residue. Positions 117 to 136 are homomultimerization; sequence IEGDHGPGDKLAANIRAGWI. Residue Ser-140 is part of the active site. Positions 207-212 are excised as a propeptide; the sequence is AMKKAL.

It belongs to the peptidase U9 family. Homopentamer. The self-cleavage of the N-terminus allows the activation of the protease. Probably also self-cleaved at the C-terminus in order to detach the protease from the scaffold protein and allow it to diffuse within the prohead to cleave the prohead proteins. After cleavage of the inner core of the prohead, the gp21 protease also destroys itself into small cleavage products.

Functionally, serine protease ot the inner core, which is activated by autocatalytic cleavage after completion of prohead assembly and processes many prohead proteins. These cleaved peptides from the inner core and the auto-cleaved protease escape from the capsid, thus liberating space for the phage DNA genome. Cleaves the prohead proteins after the sequence motif L/I-X-E. In Escherichia coli (Bacteriophage T4), this protein is Prohead core protein protease (21).